We begin with the raw amino-acid sequence, 147 residues long: D-aminoacyl-tRNA deacylase (147 aa).

Positions 137 to 138 (GP) match the Gly-cisPro motif, important for rejection of L-amino acids motif.

Belongs to the DTD family. Homodimer.

Its subcellular location is the cytoplasm. The enzyme catalyses glycyl-tRNA(Ala) + H2O = tRNA(Ala) + glycine + H(+). It catalyses the reaction a D-aminoacyl-tRNA + H2O = a tRNA + a D-alpha-amino acid + H(+). Functionally, an aminoacyl-tRNA editing enzyme that deacylates mischarged D-aminoacyl-tRNAs. Also deacylates mischarged glycyl-tRNA(Ala), protecting cells against glycine mischarging by AlaRS. Acts via tRNA-based rather than protein-based catalysis; rejects L-amino acids rather than detecting D-amino acids in the active site. By recycling D-aminoacyl-tRNA to D-amino acids and free tRNA molecules, this enzyme counteracts the toxicity associated with the formation of D-aminoacyl-tRNA entities in vivo and helps enforce protein L-homochirality. The polypeptide is D-aminoacyl-tRNA deacylase (Bacillus pumilus (strain SAFR-032)).